The following is a 347-amino-acid chain: NADH-ubiquinone oxidoreductase chain 2 (347 aa).

The next 10 helical transmembrane spans lie at 13–33 (VFTG…WLGL), 55–75 (AAIK…MAIL), 96–116 (LMIV…FWVP), 122–142 (VPLT…ISIM), 151–171 (TNIL…GGLN), 178–198 (ILAY…PYNP), 199–219 (NITI…FLIL), 237–257 (LTWL…LPPL), 277–297 (IAPT…ARLI), and 326–346 (LPTL…ILSI).

The protein belongs to the complex I subunit 2 family. As to quaternary structure, core subunit of respiratory chain NADH dehydrogenase (Complex I) which is composed of 45 different subunits. Interacts with TMEM242.

Its subcellular location is the mitochondrion inner membrane. It carries out the reaction a ubiquinone + NADH + 5 H(+)(in) = a ubiquinol + NAD(+) + 4 H(+)(out). Core subunit of the mitochondrial membrane respiratory chain NADH dehydrogenase (Complex I) which catalyzes electron transfer from NADH through the respiratory chain, using ubiquinone as an electron acceptor. Essential for the catalytic activity and assembly of complex I. In Pongo pygmaeus (Bornean orangutan), this protein is NADH-ubiquinone oxidoreductase chain 2.